We begin with the raw amino-acid sequence, 165 residues long: uncharacterized protein (165 aa).

The N-acetyltransferase domain occupies 8–159; the sequence is LLVNYKTLEE…QGVQEQTTKP (152 aa).

This is an uncharacterized protein from Shouchella clausii (strain KSM-K16) (Alkalihalobacillus clausii).